The chain runs to 344 residues: Fibronectin type 3 and ankyrin repeat domains 1 protein (344 aa).

The 98-residue stretch at 11 to 108 folds into the Fibronectin type-III domain; it reads KPHPPVVGKV…VVSVATTREP (98 aa). 6 ANK repeats span residues 109–139, 143–172, 176–205, 209–238, 243–273, and 277–306; these read ISSE…MIDV, FGFT…DVNL, SGKD…SWEA, GGCT…EVDV, SGWT…DVNI, and DGKT…DATV.

In terms of assembly, interacts with COPS5; regulates the phosphorylation of JUN and the transcriptional activity of AP-1. Interacts with RYBP; may prevent the ubiquitin-mediated proteasomal degradation of FANK1. Polyubiquitinated. Polyubiquitination leads to proteasomal degradation. As to expression, mostly restricted to testis (at protein level), including mid to late pachytene spermatocytes (stages VI-X), diplotene spermatocytes (stage XI), meiotically dividing spermatocytes (stage XII) and spermatids in steps 1-14. Highest levels in late pachytene spermatocytes and spermatids in steps 1-9.

It is found in the nucleus. The protein localises to the cytoplasm. Its subcellular location is the cytosol. It localises to the cytoskeleton. The protein resides in the cilium basal body. It is found in the cell projection. The protein localises to the cilium. Its function is as follows. Through the activation of JUN and AP-1-mediated transcription, may regulate apoptosis. This is Fibronectin type 3 and ankyrin repeat domains 1 protein from Mus musculus (Mouse).